The primary structure comprises 363 residues: GDSL esterase/lipase At3g14220 (363 aa).

A signal peptide spans 1–28 (MAKNRNLVFFLGVLASFTLSSFPVTVSG). Residue Ser-39 is the Nucleophile of the active site. Residues Asp-318 and His-321 contribute to the active site.

It belongs to the 'GDSL' lipolytic enzyme family.

Its subcellular location is the secreted. The sequence is that of GDSL esterase/lipase At3g14220 from Arabidopsis thaliana (Mouse-ear cress).